Here is a 63-residue protein sequence, read N- to C-terminus: Large ribosomal subunit protein uL29 (63 aa).

This sequence belongs to the universal ribosomal protein uL29 family.

In Vibrio vulnificus (strain CMCP6), this protein is Large ribosomal subunit protein uL29.